Here is a 286-residue protein sequence, read N- to C-terminus: S-methyl-5'-thioadenosine phosphorylase (286 aa).

Phosphate is bound by residues Ser-11, 53 to 54 (RH), and 86 to 87 (SA). A substrate-binding site is contributed by Met-185. Position 186 (Thr-186) interacts with phosphate. Residue 209 to 211 (DYD) participates in substrate binding.

This sequence belongs to the PNP/MTAP phosphorylase family. MTAP subfamily. In terms of assembly, homohexamer. Dimer of a homotrimer.

It carries out the reaction S-methyl-5'-thioadenosine + phosphate = 5-(methylsulfanyl)-alpha-D-ribose 1-phosphate + adenine. Its pathway is amino-acid biosynthesis; L-methionine biosynthesis via salvage pathway; S-methyl-5-thio-alpha-D-ribose 1-phosphate from S-methyl-5'-thioadenosine (phosphorylase route): step 1/1. In terms of biological role, catalyzes the reversible phosphorylation of S-methyl-5'-thioadenosine (MTA) to adenine and 5-methylthioribose-1-phosphate. Involved in the breakdown of MTA, a major by-product of polyamine biosynthesis. Responsible for the first step in the methionine salvage pathway after MTA has been generated from S-adenosylmethionine. Has broad substrate specificity with 6-aminopurine nucleosides as preferred substrates. The sequence is that of S-methyl-5'-thioadenosine phosphorylase from Geobacter sulfurreducens (strain ATCC 51573 / DSM 12127 / PCA).